Reading from the N-terminus, the 84-residue chain is Polcalcin Nic t 1 (84 aa).

2 EF-hand domains span residues 6-40 and 41-76; these read QDIA…MLGS and VTSE…NRGL. Ca(2+)-binding residues include D19, N21, D23, K25, E30, D54, D56, D58, and E65.

This is Polcalcin Nic t 1 (Nict1) from Nicotiana tabacum (Common tobacco).